The chain runs to 699 residues: 4-alpha-glucanotransferase (699 aa).

This sequence belongs to the disproportionating enzyme family.

The protein localises to the cytoplasm. It carries out the reaction Transfers a segment of a (1-&gt;4)-alpha-D-glucan to a new position in an acceptor, which may be glucose or a (1-&gt;4)-alpha-D-glucan.. The protein is 4-alpha-glucanotransferase (malQ) of Haemophilus influenzae (strain ATCC 51907 / DSM 11121 / KW20 / Rd).